The chain runs to 201 residues: FMN-dependent NADH:quinone oxidoreductase (201 aa).

Residues Ser9 and 16–18 (SYS) each bind FMN.

Belongs to the azoreductase type 1 family. In terms of assembly, homodimer. It depends on FMN as a cofactor.

It catalyses the reaction 2 a quinone + NADH + H(+) = 2 a 1,4-benzosemiquinone + NAD(+). It carries out the reaction N,N-dimethyl-1,4-phenylenediamine + anthranilate + 2 NAD(+) = 2-(4-dimethylaminophenyl)diazenylbenzoate + 2 NADH + 2 H(+). Its function is as follows. Quinone reductase that provides resistance to thiol-specific stress caused by electrophilic quinones. Functionally, also exhibits azoreductase activity. Catalyzes the reductive cleavage of the azo bond in aromatic azo compounds to the corresponding amines. The protein is FMN-dependent NADH:quinone oxidoreductase of Mesomycoplasma hyopneumoniae (strain J / ATCC 25934 / NCTC 10110) (Mycoplasma hyopneumoniae).